The primary structure comprises 383 residues: Cell division protein FtsZ (383 aa).

GTP-binding positions include 20–24 (GGGGN), 107–109 (GTG), E138, R142, and N186.

Belongs to the FtsZ family. Homodimer. Polymerizes to form a dynamic ring structure in a strictly GTP-dependent manner. Interacts directly with several other division proteins.

It localises to the cytoplasm. Functionally, essential cell division protein that forms a contractile ring structure (Z ring) at the future cell division site. The regulation of the ring assembly controls the timing and the location of cell division. One of the functions of the FtsZ ring is to recruit other cell division proteins to the septum to produce a new cell wall between the dividing cells. Binds GTP and shows GTPase activity. This Escherichia coli O157:H7 protein is Cell division protein FtsZ.